The following is a 198-amino-acid chain: Recombination protein RecR (198 aa).

The C4-type zinc-finger motif lies at C57–C72. The Toprim domain occupies S80–P175.

It belongs to the RecR family.

May play a role in DNA repair. It seems to be involved in an RecBC-independent recombinational process of DNA repair. It may act with RecF and RecO. This chain is Recombination protein RecR, found in Methylococcus capsulatus (strain ATCC 33009 / NCIMB 11132 / Bath).